A 304-amino-acid polypeptide reads, in one-letter code: Dihydroorotate dehydrogenase B (NAD(+)), catalytic subunit (304 aa).

FMN-binding positions include Ser21 and 45–46; that span reads KA. Substrate-binding positions include Lys45 and 69–73; that span reads NAIGL. FMN contacts are provided by Asn99 and Asn127. A substrate-binding site is contributed by Asn127. Catalysis depends on Cys130, which acts as the Nucleophile. The FMN site is built by Lys165 and Ile191. 192-193 serves as a coordination point for substrate; the sequence is NT. FMN-binding positions include Gly217, 243–244, and 265–266; these read GG and GT.

It belongs to the dihydroorotate dehydrogenase family. Type 1 subfamily. As to quaternary structure, heterotetramer of 2 PyrK and 2 PyrD type B subunits. FMN is required as a cofactor.

The protein resides in the cytoplasm. It catalyses the reaction (S)-dihydroorotate + NAD(+) = orotate + NADH + H(+). It participates in pyrimidine metabolism; UMP biosynthesis via de novo pathway; orotate from (S)-dihydroorotate (NAD(+) route): step 1/1. In terms of biological role, catalyzes the conversion of dihydroorotate to orotate with NAD(+) as electron acceptor. The sequence is that of Dihydroorotate dehydrogenase B (NAD(+)), catalytic subunit (pyrD) from Listeria monocytogenes serotype 4b (strain F2365).